The sequence spans 275 residues: Nitrogenase iron protein 1 (275 aa).

9–16 (GKGGIGKS) serves as a coordination point for ATP. Residue Cys-97 participates in [4Fe-4S] cluster binding. Position 100 is an ADP-ribosylarginine; by dinitrogenase reductase ADP-ribosyltransferase (Arg-100). [4Fe-4S] cluster is bound at residue Cys-132.

It belongs to the NifH/BchL/ChlL family. In terms of assembly, homodimer. Requires [4Fe-4S] cluster as cofactor. Post-translationally, the reversible ADP-ribosylation of Arg-100 inactivates the nitrogenase reductase and regulates nitrogenase activity.

It catalyses the reaction N2 + 8 reduced [2Fe-2S]-[ferredoxin] + 16 ATP + 16 H2O = H2 + 8 oxidized [2Fe-2S]-[ferredoxin] + 2 NH4(+) + 16 ADP + 16 phosphate + 6 H(+). Its function is as follows. The key enzymatic reactions in nitrogen fixation are catalyzed by the nitrogenase complex, which has 2 components: the iron protein and the molybdenum-iron protein. In Methanothermobacter marburgensis (strain ATCC BAA-927 / DSM 2133 / JCM 14651 / NBRC 100331 / OCM 82 / Marburg) (Methanobacterium thermoautotrophicum), this protein is Nitrogenase iron protein 1 (nifH1).